The sequence spans 124 residues: BLOC-1-related complex subunit 8 (124 aa).

The disordered stretch occupies residues Ser102–Pro124.

The protein belongs to the BORCS8 family.

It is found in the lysosome membrane. In terms of biological role, as part of a BORC-like complex, it may play a role in the movement and localization of lysosomes at the cell periphery. Associated with the cytosolic face of lysosomes, this complex may couple lysosomes to microtubule plus-end-directed kinesin motors, driving lysosome movement toward the cell periphery. The polypeptide is BLOC-1-related complex subunit 8 (Danio rerio (Zebrafish)).